Reading from the N-terminus, the 390-residue chain is Endonuclease 8-like 1 (390 aa).

Pro2 serves as the catalytic Schiff-base intermediate with DNA. The Proton donor role is filled by Glu3. Lys54 functions as the Proton donor; for beta-elimination activity in the catalytic mechanism. Asn176 is a binding site for DNA. The tract at residues 278–390 (TIWFQGDPGP…SLEPEGTSAS (113 aa)) is disordered. A compositionally biased stretch (basic residues) spans 291–301 (KGRKSRKKKSK). Polar residues predominate over residues 335-347 (TATQRPEGTSLQQ). Arg339 provides a ligand contact to DNA. Residue Arg339 is the Proton donor; for delta-elimination activity of the active site.

It belongs to the FPG family. As to expression, ubiquitous.

The protein localises to the cytoplasm. It localises to the cytoskeleton. Its subcellular location is the microtubule organizing center. It is found in the centrosome. The protein resides in the nucleus. The protein localises to the chromosome. The catalysed reaction is 2'-deoxyribonucleotide-(2'-deoxyribose 5'-phosphate)-2'-deoxyribonucleotide-DNA = a 3'-end 2'-deoxyribonucleotide-(2,3-dehydro-2,3-deoxyribose 5'-phosphate)-DNA + a 5'-end 5'-phospho-2'-deoxyribonucleoside-DNA + H(+). In terms of biological role, involved in base excision repair of DNA damaged by oxidation or by mutagenic agents. Acts as a DNA glycosylase that recognizes and removes damaged bases. Has a preference for oxidized pyrimidines, such as thymine glycol, formamidopyrimidine (Fapy) and 5-hydroxyuracil. Has marginal activity towards 8-oxoguanine. Has AP (apurinic/apyrimidinic) lyase activity and introduces nicks in the DNA strand. Cleaves the DNA backbone by beta-delta elimination to generate a single-strand break at the site of the removed base with both 3'- and 5'-phosphates. Has DNA glycosylase/lyase activity towards mismatched uracil and thymine, in particular in U:C and T:C mismatches. Specifically binds 5-hydroxymethylcytosine (5hmC), suggesting that it acts as a specific reader of 5hmC. The protein is Endonuclease 8-like 1 (NEIL1) of Homo sapiens (Human).